The sequence spans 78 residues: UPF0349 protein BLi03401/BL03152 (78 aa).

This sequence belongs to the UPF0349 family.

In Bacillus licheniformis (strain ATCC 14580 / DSM 13 / JCM 2505 / CCUG 7422 / NBRC 12200 / NCIMB 9375 / NCTC 10341 / NRRL NRS-1264 / Gibson 46), this protein is UPF0349 protein BLi03401/BL03152.